The following is a 473-amino-acid chain: GTPase Der (473 aa).

2 consecutive EngA-type G domains span residues 3 to 167 (LTIA…GKDK) and 204 to 379 (IRIA…RIWN). Residues 9–16 (GRPNVGKS), 56–60 (DTAGL), 119–122 (NKSE), 210–217 (GRPNTGKS), 257–261 (DTAGL), and 322–325 (NKWD) contribute to the GTP site. The region spanning 380–464 (RRISTGKLNR…PIRLSLRTSD (85 aa)) is the KH-like domain.

The protein belongs to the TRAFAC class TrmE-Era-EngA-EngB-Septin-like GTPase superfamily. EngA (Der) GTPase family. Associates with the 50S ribosomal subunit.

In terms of biological role, GTPase that plays an essential role in the late steps of ribosome biogenesis. The protein is GTPase Der of Bartonella bacilliformis (strain ATCC 35685 / KC583 / Herrer 020/F12,63).